A 1014-amino-acid polypeptide reads, in one-letter code: MLRFVSSQTCRYSSRGLLKTSLLKNASTVKIVGRGLATTGTDNFLSTSNATYIDEMYQAWQKDPSSVHVSWDAYFKNMSNPKIPATKAFQAPPSISNFPQGTEAAPLGTAMTGSVDENVSIHLKVQLLCRAYQVRGHLKAHIDPLGISFGSNKNNPVPPELTLDYYGFSKHDLDKEINLGPGILPRFARDGKSKMSLKEIVDHLEKLYCSSYGVQYTHIPSKQKCDWLRERIEIPEPYQYTVDQKRQILDRLTWATSFESFLSTKFPNDKRFGLEGLESVVPGIKTLVDRSVELGVEDIVLGMAHRGRLNVLSNVVRKPNESIFSEFKGSSARDDIEGSGDVKYHLGMNYQRPTTSGKYVNLSLVANPSHLESQDPVVLGRTRALLHAKNDLKEKTKALGVLLHGDAAFAGQGVVYETMGFLTLPEYSTGGTIHVITNNQIGFTTDPRFARSTPYPSDLAKAIDAPIFHVNANDVEAVTFIFNLAAEWRHKFHTDAIIDVVGWRKHGHNETDQPSFTQPLMYKKIAKQKSVIDVYTEKLISEGTFSKKDIDEHKKWVWNLFEDAFEKAKDYVPSQREWLTAAWEGFKSPKELATEILPHEPTNVPESTLKELGKVLSSWPEGFEVHKNLKRILKNRGKSIETGEGIDWATGEALAFGTLVLDGQNVRVSGEDVERGTFSQRHAVLHDQQSEAIYTPLSTLNNEKADFTIANSSLSEYGVMGFEYGYSLTSPDYLVMWEAQFGDFANTAQVIIDQFIAGGEQKWKQRSGLVLSLPHGYDGQGPEHSSGRLERFLQLANEDPRYFPSEEKLQRQHQDCNFQVVYPTTPANLFHILRRQQHRQFRKPLALFFSKQLLRHPLARSSLSEFTEGGFQWIIEDIEHGKSIGTKEETKRLVLLSGQVYTALHKRRESLGDKTTAFLKIEQLHPFPFAQLRDSLNSYPNLEEIVWCQEEPLNMGSWAYTEPRLHTTLKETDKYKDFKVRYCGRNPSGAVAAGSKSLHLAEEDAFLKDVFQQS.

Residues 1–30 constitute a mitochondrion transit peptide; it reads MLRFVSSQTCRYSSRGLLKTSLLKNASTVK. Positions 306, 406, 439, and 441 each coordinate thiamine diphosphate. Mg(2+) is bound by residues aspartate 406, asparagine 439, and isoleucine 441.

The protein belongs to the alpha-ketoglutarate dehydrogenase family. In terms of assembly, component of the 2-oxoglutarate dehydrogenase complex (OGDC), also called alpha-ketoglutarate dehydrogenase (KGDH) complex. The copmplex is composed of the catalytic subunits OGDH (2-oxoglutarate dehydrogenase KGD1; also called E1 subunit), DLST (dihydrolipoamide succinyltransferase KGD2; also called E2 subunit) and DLD (dihydrolipoamide dehydrogenase LPD1; also called E3 subunit), and the assembly factor KGD4. Thiamine diphosphate is required as a cofactor. It depends on Mg(2+) as a cofactor.

The protein resides in the mitochondrion. It localises to the mitochondrion matrix. Its subcellular location is the mitochondrion nucleoid. The enzyme catalyses N(6)-[(R)-lipoyl]-L-lysyl-[protein] + 2-oxoglutarate + H(+) = N(6)-[(R)-S(8)-succinyldihydrolipoyl]-L-lysyl-[protein] + CO2. Its activity is regulated as follows. Catabolite repressed. In terms of biological role, the 2-oxoglutarate dehydrogenase complex catalyzes the overall conversion of 2-oxoglutarate to succinyl-CoA and CO(2). It contains multiple copies of three enzymatic components: 2-oxoglutarate dehydrogenase (E1), dihydrolipoamide succinyltransferase (E2) and lipoamide dehydrogenase (E3). The sequence is that of 2-oxoglutarate dehydrogenase, mitochondrial (KGD1) from Saccharomyces cerevisiae (strain ATCC 204508 / S288c) (Baker's yeast).